The primary structure comprises 109 residues: MPSESRKRLSSKKGATVRLELVENYVICFFTVLCFCLIPHSSIDWRSGLSCYYFIDFFFFHLSPSIPFWFYPFSVKNHHTRSIRPRTKSEKNKQVVSDPFLYSCSRVAF.

The next 2 helical transmembrane spans lie at 19-39 and 53-73; these read LELV…CLIP and YFID…FYPF.

Its subcellular location is the membrane. This is an uncharacterized protein from Saccharomyces cerevisiae (strain ATCC 204508 / S288c) (Baker's yeast).